Reading from the N-terminus, the 416-residue chain is Zinc finger protein 92 homolog (416 aa).

Residues 14–85 form the KRAB domain; that stretch reads VSFEDVSVYF…DIPRTWATAG (72 aa). The tract at residues 86-125 is disordered; sequence LHIGDRTQSKTSTSTQKHSGRQLPGADPQGGKEGQAARSS. 8 consecutive C2H2-type zinc fingers follow at residues 152-174, 180-202, 208-230, 236-258, 264-286, 292-314, 320-342, and 348-370; these read YLCQ…RIIH, YACP…QRIH, YACP…QVIH, FACG…ARVH, YACP…QRTH, YACG…QRSH, FACR…RRVH, and YECS…QAVH. The disordered stretch occupies residues 368 to 416; the sequence is AVHGARRPAKAETARRLAGPGSTGPGSAVAATSPPRPSTAARPSRPSRR. Positions 394–416 are enriched in low complexity; the sequence is SAVAATSPPRPSTAARPSRPSRR.

Belongs to the krueppel C2H2-type zinc-finger protein family.

Its subcellular location is the nucleus. Functionally, KRAB domain-containing zinc-finger protein that represses B1/Alu SINE transposable elements and modulates the transcription of nearby genes in a tissue-specific manner. It regulates glucose homeostasis and lipid metabolism by modulating the expression of the endocrine cell-defining transcription factor, MAFB, in pancreatic islets and, the fat metabolism regulator, ACACB, in adipose tissue and muscle. The polypeptide is Zinc finger protein 92 homolog (ZFP92) (Homo sapiens (Human)).